The following is a 220-amino-acid chain: UPF0643 protein PB2B2.08 (220 aa).

It belongs to the UPF0643 family.

The protein resides in the cytoplasm. It is found in the nucleus. This Schizosaccharomyces pombe (strain 972 / ATCC 24843) (Fission yeast) protein is UPF0643 protein PB2B2.08.